A 379-amino-acid chain; its full sequence is Queuine tRNA-ribosyltransferase (379 aa).

The active-site Proton acceptor is D94. Substrate-binding positions include 94–98 (DSGGF), D148, Q191, and G218. The RNA binding stretch occupies residues 249–255 (GVGSPDA). D268 (nucleophile) is an active-site residue. An RNA binding; important for wobble base 34 recognition region spans residues 273 to 277 (TRIAR). C306, C308, C311, and H337 together coordinate Zn(2+).

Belongs to the queuine tRNA-ribosyltransferase family. Homodimer. Within each dimer, one monomer is responsible for RNA recognition and catalysis, while the other monomer binds to the replacement base PreQ1. The cofactor is Zn(2+).

It carries out the reaction 7-aminomethyl-7-carbaguanine + guanosine(34) in tRNA = 7-aminomethyl-7-carbaguanosine(34) in tRNA + guanine. The protein operates within tRNA modification; tRNA-queuosine biosynthesis. In terms of biological role, catalyzes the base-exchange of a guanine (G) residue with the queuine precursor 7-aminomethyl-7-deazaguanine (PreQ1) at position 34 (anticodon wobble position) in tRNAs with GU(N) anticodons (tRNA-Asp, -Asn, -His and -Tyr). Catalysis occurs through a double-displacement mechanism. The nucleophile active site attacks the C1' of nucleotide 34 to detach the guanine base from the RNA, forming a covalent enzyme-RNA intermediate. The proton acceptor active site deprotonates the incoming PreQ1, allowing a nucleophilic attack on the C1' of the ribose to form the product. After dissociation, two additional enzymatic reactions on the tRNA convert PreQ1 to queuine (Q), resulting in the hypermodified nucleoside queuosine (7-(((4,5-cis-dihydroxy-2-cyclopenten-1-yl)amino)methyl)-7-deazaguanosine). The polypeptide is Queuine tRNA-ribosyltransferase (Macrococcus caseolyticus (strain JCSC5402) (Macrococcoides caseolyticum)).